The chain runs to 313 residues: D-alanine--D-alanine ligase (313 aa).

One can recognise an ATP-grasp domain in the interval 111 to 306 (KQVWHSLGLP…FQQLVLAILA (196 aa)). 137–192 (AAELGFPLIVKPAHEGSSIGMAKVESVEALIAAWQDAARYDSQVLVEQWIAGPEYT) serves as a coordination point for ATP. Aspartate 260, glutamate 273, and asparagine 275 together coordinate Mg(2+).

The protein belongs to the D-alanine--D-alanine ligase family. It depends on Mg(2+) as a cofactor. Requires Mn(2+) as cofactor.

It localises to the cytoplasm. The enzyme catalyses 2 D-alanine + ATP = D-alanyl-D-alanine + ADP + phosphate + H(+). Its pathway is cell wall biogenesis; peptidoglycan biosynthesis. Cell wall formation. The protein is D-alanine--D-alanine ligase of Ectopseudomonas mendocina (strain ymp) (Pseudomonas mendocina).